Reading from the N-terminus, the 193-residue chain is Probable 3' cyclic ADP-D-ribose synthase ThsB' (193 aa).

In terms of assembly, homodimer.

It carries out the reaction NAD(+) = 3'cADPR + nicotinamide + H(+). In terms of biological role, TIR-like domain-containing component of the Thoeris antiviral defense system, composed of ThsA and ThsB and ThsB'. In the presence of NAD(+) produces a signaling molecule that activates cognate ThsA (AC J8G6Z1) to hydrolyze NAD(+). The signaling molecule is a cyclic ADP-D-ribose isomer and may be 3' cyclic ADP-D-ribose (3'cADPR); it is not 2'cADPR. This chain is Probable 3' cyclic ADP-D-ribose synthase ThsB', found in Bacillus cereus (strain MSX-D12).